Here is a 264-residue protein sequence, read N- to C-terminus: Transmembrane protein 41A (264 aa).

The signal sequence occupies residues M1–A17. 5 consecutive transmembrane segments (helical) span residues A67–G87, G100–L122, L153–L173, A175–P195, and W219–I239. The segment at G96–L207 is VTT domain.

It belongs to the TMEM41 family.

It localises to the membrane. In Mus musculus (Mouse), this protein is Transmembrane protein 41A (Tmem41a).